A 981-amino-acid polypeptide reads, in one-letter code: Colossin-C (981 aa).

An N-terminal signal peptide occupies residues 1–23; that stretch reads MKILYSLLLISSIILNTVLNISS. N63 carries an N-linked (GlcNAc...) asparagine glycan. The tract at residues 172–195 is disordered; sequence EQTQPPTQPPTQPPTQPPTPPPFT. The span at 177 to 194 shows a compositional bias: pro residues; sequence PTQPPTQPPTQPPTPPPF. Residues N222, N591, and N811 are each glycosylated (N-linked (GlcNAc...) asparagine).

Belongs to the serine-aspartate repeat-containing protein (SDr) family.

Its subcellular location is the secreted. The sequence is that of Colossin-C (colC) from Dictyostelium discoideum (Social amoeba).